A 118-amino-acid chain; its full sequence is Large ribosomal subunit protein uL22c (118 aa).

It belongs to the universal ribosomal protein uL22 family. As to quaternary structure, part of the 50S ribosomal subunit.

The protein localises to the plastid. The protein resides in the organellar chromatophore. Functionally, this protein binds specifically to 23S rRNA. Its function is as follows. The globular domain of the protein is located near the polypeptide exit tunnel on the outside of the subunit, while an extended beta-hairpin is found that lines the wall of the exit tunnel in the center of the 70S ribosome. The sequence is that of Large ribosomal subunit protein uL22c (rpl22) from Paulinella chromatophora.